Reading from the N-terminus, the 444-residue chain is Probable glycine dehydrogenase (decarboxylating) subunit 1 (444 aa).

This sequence belongs to the GcvP family. N-terminal subunit subfamily. As to quaternary structure, the glycine cleavage system is composed of four proteins: P, T, L and H. In this organism, the P 'protein' is a heterodimer of two subunits.

The enzyme catalyses N(6)-[(R)-lipoyl]-L-lysyl-[glycine-cleavage complex H protein] + glycine + H(+) = N(6)-[(R)-S(8)-aminomethyldihydrolipoyl]-L-lysyl-[glycine-cleavage complex H protein] + CO2. The glycine cleavage system catalyzes the degradation of glycine. The P protein binds the alpha-amino group of glycine through its pyridoxal phosphate cofactor; CO(2) is released and the remaining methylamine moiety is then transferred to the lipoamide cofactor of the H protein. This Prosthecochloris aestuarii (strain DSM 271 / SK 413) protein is Probable glycine dehydrogenase (decarboxylating) subunit 1.